Here is a 740-residue protein sequence, read N- to C-terminus: Catalase-peroxidase 2 (740 aa).

An N-terminal signal peptide occupies residues 1–27 (MFKKTKPRISILALTISCAIYSGAALA). A cross-link (tryptophyl-tyrosyl-methioninium (Trp-Tyr) (with M-254)) is located at residues 106–228 (WHSAGTYRIY…LAAVQMGLIY (123 aa)). His107 acts as the Proton acceptor in catalysis. A cross-link (tryptophyl-tyrosyl-methioninium (Tyr-Met) (with W-106)) is located at residues 228 to 254 (YVNPEGPNGVPDPLLAAKDIRDTFGRM). His269 lines the heme b pocket.

It belongs to the peroxidase family. Peroxidase/catalase subfamily. As to quaternary structure, homodimer or homotetramer. Heme b serves as cofactor. In terms of processing, formation of the three residue Trp-Tyr-Met cross-link is important for the catalase, but not the peroxidase activity of the enzyme.

It catalyses the reaction H2O2 + AH2 = A + 2 H2O. It carries out the reaction 2 H2O2 = O2 + 2 H2O. Its function is as follows. Bifunctional enzyme with both catalase and broad-spectrum peroxidase activity. The polypeptide is Catalase-peroxidase 2 (Cellvibrio japonicus (strain Ueda107) (Pseudomonas fluorescens subsp. cellulosa)).